We begin with the raw amino-acid sequence, 169 residues long: Probable prefoldin subunit 3 (169 aa).

It belongs to the prefoldin subunit alpha family. As to quaternary structure, heterohexamer of two PFD-alpha type and four PFD-beta type subunits.

Its function is as follows. Binds specifically to cytosolic chaperonin (c-CPN) and transfers target proteins to it. Binds to nascent polypeptide chain and promotes folding in an environment in which there are many competing pathways for nonnative proteins. The chain is Probable prefoldin subunit 3 from Schizosaccharomyces pombe (strain 972 / ATCC 24843) (Fission yeast).